The chain runs to 335 residues: MTAPSKPVLVADIGGTNARFALADIDASVPLLDDTCREFAVVEFGSLGEAARYYLDQIGVQATKGVFAVAGRVDGDEARITNHPWVISRSRTATMLGFSTLHLINDFAAQAMAISLLRPQDVVQVGGASWRPAPIEQPRNYGVIGPGTGLGVGGLIIRNGRCFPLETEGGHVSFPPGTPEEIRVLEILSEQFGRVSNERLICGPGLVNIHRALSEIAGIDPGPLEPKDITARAAAGDPRASRTIDLFCAIFGAIAGDMVLMQGAWDGVFLTGGLVPKVLDSLQHSGFRQRFEHKGRFSAIMSRVPSLAVMHPHAGLLGAAAYAVDAERALPGEQR.

11-16 provides a ligand contact to ATP; the sequence is ADIGGT.

This sequence belongs to the bacterial glucokinase family.

It localises to the cytoplasm. It carries out the reaction D-glucose + ATP = D-glucose 6-phosphate + ADP + H(+). The sequence is that of Glucokinase from Xanthomonas campestris pv. campestris (strain B100).